The sequence spans 338 residues: MLGCSSLSIRTTDDKSLFARTMDFTMEPDSKVIIVPRNYGIRLLEKENVVINNSYAFVGMGSTDITSPVLYDGVNEKGLMGAMLYYATFATYADEPKKGTTGINPVYVISQVLGNCVTVDDVIEKLTSYTLLNEANIILGFAPPLHYTFTDASGESIVIEPDKTGITIHRKTIGVMTNSPGYEWHQTNLRAYIGVTPNPPQDIMMGDLDLTPFGQGAGGLGLPGDFTPSARFLRVAYWKKYTEKAKNETEGVTNLFHILSSVNIPKGVVLTNEGKTDYTIYTSAMCAQSKNYYFKLYDNSRISAVSLMAENLNSQDLITFEWDRKQDIKQLNQVNVMS.

A propeptide spans 1–3 (removed in mature form); the sequence is MLG. Cys4 functions as the Nucleophile in the catalytic mechanism.

The protein belongs to the peptidase C59 family. In terms of assembly, homotetramer. Post-translationally, expressed as an inactive precursor that is cleaved autocatalytically at Gly-3/Cys-4 to generate an active enzyme. Processing exposes a catalytic N-terminal nucleophile residue with a free alpha amino group.

It carries out the reaction a penicillin + H2O = 6-aminopenicillanate + a carboxylate. Hydrolase activity is rapidly inhibited by lysine modifying reagents. Functionally, catalyzes the hydrolysis of penicillin V to 6-aminopenicillanate (6-APA). Exhibits high specificity for penicillin V. Penicillin G and other related compounds are hydrolyzed at less than 10% of the rate of penicillin V. Among the cephalosporins, cephalosporin C is resistant to cleavage, whereas cephalosporin G is cleaved at about 1% of the rate of cleavage of penicillin V. The sequence is that of Penicillin V acylase from Lysinibacillus sphaericus (Bacillus sphaericus).